The chain runs to 296 residues: Homoserine kinase (296 aa).

84–94 (PLARGLGSSSS) is an ATP binding site.

Belongs to the GHMP kinase family. Homoserine kinase subfamily.

It localises to the cytoplasm. It carries out the reaction L-homoserine + ATP = O-phospho-L-homoserine + ADP + H(+). It functions in the pathway amino-acid biosynthesis; L-threonine biosynthesis; L-threonine from L-aspartate: step 4/5. In terms of biological role, catalyzes the ATP-dependent phosphorylation of L-homoserine to L-homoserine phosphate. This chain is Homoserine kinase (thrB), found in Lactococcus lactis subsp. cremoris (Streptococcus cremoris).